A 135-amino-acid chain; its full sequence is Galectin-1 (135 aa).

An N-acetylalanine modification is found at alanine 2. The region spanning 4–135 (GLVASNLNLK…DFKIKCVAFD (132 aa)) is the Galectin domain. 2 positions are modified to N6-acetyllysine: lysine 13 and lysine 29. Serine 30 bears the Phosphoserine mark. A beta-D-galactoside is bound by residues 45 to 49 (HFNPR), histidine 53, asparagine 62, and 69 to 72 (WGTE). N6-acetyllysine; alternate is present on lysine 108. Lysine 108 carries the post-translational modification N6-succinyllysine; alternate. An N6-acetyllysine modification is found at lysine 128.

In terms of assembly, homodimer. Binds LGALS3BP. Interacts with CD2, CD3, CD4, CD6, CD7, CD43, ALCAM and CD45. Interacts with laminin (via poly-N-acetyllactosamine). Interacts with SUSD2.

It localises to the secreted. Its subcellular location is the extracellular space. The protein localises to the extracellular matrix. Functionally, lectin that binds beta-galactoside and a wide array of complex carbohydrates. Plays a role in regulating apoptosis, cell proliferation and cell differentiation. Inhibits CD45 protein phosphatase activity and therefore the dephosphorylation of Lyn kinase. Strong inducer of T-cell apoptosis. The chain is Galectin-1 (LGALS1) from Pongo abelii (Sumatran orangutan).